The primary structure comprises 61 residues: Small venom protein 1 (61 aa).

The first 20 residues, 1-20 (MRCVAIFLVVICAFVLQALA), serve as a signal peptide directing secretion.

In terms of tissue distribution, expressed by the venom gland.

The protein localises to the secreted. This Pimpla hypochondriaca (Parasitoid wasp) protein is Small venom protein 1.